The primary structure comprises 80 residues: UPF0291 protein YlaC (80 aa).

The protein belongs to the UPF0291 family.

The protein localises to the cytoplasm. This chain is UPF0291 protein YlaC (ylcA), found in Lactococcus lactis subsp. lactis (strain IL1403) (Streptococcus lactis).